The following is a 197-amino-acid chain: Putative NADH dehydrogenase/NAD(P)H nitroreductase Lcho_1290 (197 aa).

Belongs to the nitroreductase family. HadB/RutE subfamily. FMN is required as a cofactor.

This chain is Putative NADH dehydrogenase/NAD(P)H nitroreductase Lcho_1290, found in Leptothrix cholodnii (strain ATCC 51168 / LMG 8142 / SP-6) (Leptothrix discophora (strain SP-6)).